The primary structure comprises 420 residues: Serine hydroxymethyltransferase (420 aa).

Residues L121 and 125–127 each bind (6S)-5,6,7,8-tetrahydrofolate; that span reads GHL. K230 is modified (N6-(pyridoxal phosphate)lysine). Residues E246 and 354–356 contribute to the (6S)-5,6,7,8-tetrahydrofolate site; that span reads SPF.

Belongs to the SHMT family. In terms of assembly, homodimer. It depends on pyridoxal 5'-phosphate as a cofactor.

The protein localises to the cytoplasm. The catalysed reaction is (6R)-5,10-methylene-5,6,7,8-tetrahydrofolate + glycine + H2O = (6S)-5,6,7,8-tetrahydrofolate + L-serine. It functions in the pathway one-carbon metabolism; tetrahydrofolate interconversion. The protein operates within amino-acid biosynthesis; glycine biosynthesis; glycine from L-serine: step 1/1. Functionally, catalyzes the reversible interconversion of serine and glycine with tetrahydrofolate (THF) serving as the one-carbon carrier. This reaction serves as the major source of one-carbon groups required for the biosynthesis of purines, thymidylate, methionine, and other important biomolecules. Also exhibits THF-independent aldolase activity toward beta-hydroxyamino acids, producing glycine and aldehydes, via a retro-aldol mechanism. In Rickettsia typhi (strain ATCC VR-144 / Wilmington), this protein is Serine hydroxymethyltransferase.